The following is a 370-amino-acid chain: Queuine tRNA-ribosyltransferase (370 aa).

Asp89 serves as the catalytic Proton acceptor. Substrate is bound by residues 89–93, Asp143, Gln187, and Gly214; that span reads DSGGF. The segment at 245–251 is RNA binding; the sequence is GVGKPED. The active-site Nucleophile is the Asp264. Residues 269-273 are RNA binding; important for wobble base 34 recognition; it reads TRNAR. Zn(2+) is bound by residues Cys302, Cys304, Cys307, and His333.

It belongs to the queuine tRNA-ribosyltransferase family. As to quaternary structure, homodimer. Within each dimer, one monomer is responsible for RNA recognition and catalysis, while the other monomer binds to the replacement base PreQ1. Zn(2+) is required as a cofactor.

It carries out the reaction 7-aminomethyl-7-carbaguanine + guanosine(34) in tRNA = 7-aminomethyl-7-carbaguanosine(34) in tRNA + guanine. It functions in the pathway tRNA modification; tRNA-queuosine biosynthesis. In terms of biological role, catalyzes the base-exchange of a guanine (G) residue with the queuine precursor 7-aminomethyl-7-deazaguanine (PreQ1) at position 34 (anticodon wobble position) in tRNAs with GU(N) anticodons (tRNA-Asp, -Asn, -His and -Tyr). Catalysis occurs through a double-displacement mechanism. The nucleophile active site attacks the C1' of nucleotide 34 to detach the guanine base from the RNA, forming a covalent enzyme-RNA intermediate. The proton acceptor active site deprotonates the incoming PreQ1, allowing a nucleophilic attack on the C1' of the ribose to form the product. After dissociation, two additional enzymatic reactions on the tRNA convert PreQ1 to queuine (Q), resulting in the hypermodified nucleoside queuosine (7-(((4,5-cis-dihydroxy-2-cyclopenten-1-yl)amino)methyl)-7-deazaguanosine). This is Queuine tRNA-ribosyltransferase from Baumannia cicadellinicola subsp. Homalodisca coagulata.